Here is a 96-residue protein sequence, read N- to C-terminus: Co-chaperonin GroES (96 aa).

It belongs to the GroES chaperonin family. As to quaternary structure, heptamer of 7 subunits arranged in a ring. Interacts with the chaperonin GroEL.

It localises to the cytoplasm. Its function is as follows. Together with the chaperonin GroEL, plays an essential role in assisting protein folding. The GroEL-GroES system forms a nano-cage that allows encapsulation of the non-native substrate proteins and provides a physical environment optimized to promote and accelerate protein folding. GroES binds to the apical surface of the GroEL ring, thereby capping the opening of the GroEL channel. The polypeptide is Co-chaperonin GroES (Acinetobacter baumannii (strain AB307-0294)).